The primary structure comprises 673 residues: Putative transcription factor tau subunit sfc9 (673 aa).

As to quaternary structure, may be a component of the TFIIIC complex.

It localises to the nucleus. This Schizosaccharomyces pombe (strain 972 / ATCC 24843) (Fission yeast) protein is Putative transcription factor tau subunit sfc9.